Reading from the N-terminus, the 112-residue chain is UPF0102 protein CFF8240_0294 (112 aa).

It belongs to the UPF0102 family.

The sequence is that of UPF0102 protein CFF8240_0294 from Campylobacter fetus subsp. fetus (strain 82-40).